The following is a 141-amino-acid chain: UPF0310 protein Mflv_0785 (141 aa).

Belongs to the UPF0310 family.

The protein is UPF0310 protein Mflv_0785 of Mycolicibacterium gilvum (strain PYR-GCK) (Mycobacterium gilvum (strain PYR-GCK)).